The chain runs to 160 residues: Aspartate 1-decarboxylase 2 (160 aa).

Serine 25 functions as the Schiff-base intermediate with substrate; via pyruvic acid in the catalytic mechanism. Serine 25 carries the pyruvic acid (Ser) modification. Residue threonine 57 coordinates substrate. The active-site Proton donor is tyrosine 58. Glycine 73 to alanine 75 lines the substrate pocket.

Belongs to the PanD family. In terms of assembly, heterooctamer of four alpha and four beta subunits. It depends on pyruvate as a cofactor. Is synthesized initially as an inactive proenzyme, which is activated by self-cleavage at a specific serine bond to produce a beta-subunit with a hydroxyl group at its C-terminus and an alpha-subunit with a pyruvoyl group at its N-terminus.

The protein localises to the cytoplasm. The catalysed reaction is L-aspartate + H(+) = beta-alanine + CO2. It participates in cofactor biosynthesis; (R)-pantothenate biosynthesis; beta-alanine from L-aspartate: step 1/1. Catalyzes the pyruvoyl-dependent decarboxylation of aspartate to produce beta-alanine. The sequence is that of Aspartate 1-decarboxylase 2 from Frankia casuarinae (strain DSM 45818 / CECT 9043 / HFP020203 / CcI3).